A 103-amino-acid chain; its full sequence is Small ribosomal subunit protein uS14c (103 aa).

The disordered stretch occupies residues 34-56; it reads KVSPLSLSEKTKMQEKLQSLPRN.

Belongs to the universal ribosomal protein uS14 family. Part of the 30S ribosomal subunit.

It is found in the plastid. It localises to the chloroplast. In terms of biological role, binds 16S rRNA, required for the assembly of 30S particles. The sequence is that of Small ribosomal subunit protein uS14c from Saccharum hybrid (Sugarcane).